We begin with the raw amino-acid sequence, 102 residues long: snRNA-activating protein complex subunit 5 (102 aa).

Over residues 73–82 (QTTLKLSTRS) the composition is skewed to polar residues. A disordered region spans residues 73-102 (QTTLKLSTRSPMEEEEEEEEEEEEEEESDS). Positions 85–102 (EEEEEEEEEEEEEEESDS) are enriched in acidic residues.

As to quaternary structure, part of the SNAPc complex composed of 5 subunits: SNAPC1, SNAPC2, SNAPC3, SNAPC4 and SNAPC5. SNAPC5 interacts with SNAPC4.

It is found in the nucleus. In terms of biological role, part of the SNAPc complex required for the transcription of both RNA polymerase II and III small-nuclear RNA genes. Binds to the proximal sequence element (PSE), a non-TATA-box basal promoter element common to these 2 types of genes. Recruits TBP and BRF2 to the U6 snRNA TATA box. This is snRNA-activating protein complex subunit 5 from Mus musculus (Mouse).